The sequence spans 436 residues: MSASQKEGKLSTATISVDGKSAEMPVLSGTLGPDVIDIRKLPAQLGVFTFDPGYGETAACNSKITFIDGDKGVLLHRGYPIAQLDENASYEEVIYLLLNGELPNKVQYDTFTNTLTNHTLLHEQIRNFFNGFRRDAHPMAILCGTVGALSAFYPDANDIAIPANRDLAAMRLIAKIPTIAAWAYKYTQGEAFIYPRNDLNYAENFLSMMFARMSEPYKVNPVLARAMNRILILHADHEQNASTSTVRLAGSTGANPFACIAAGIAALWGPAHGGANEAVLKMLARIGKKENIPAFIAQVKDKNSGVKLMGFGHRVYKNFDPRAKIMQQTCHEVLTELGIKDDPLLDLAVELEKIALSDDYFVQRKLYPNVDFYSGIILKAMGIPTSMFTVLFAVARTTGWVSQWKEMIEEPGQRISRPRQLYIGAPQRDYVPLAKR.

Active-site residues include His-313 and Asp-371.

This sequence belongs to the citrate synthase family. In terms of assembly, homohexamer.

It catalyses the reaction oxaloacetate + acetyl-CoA + H2O = citrate + CoA + H(+). It participates in carbohydrate metabolism; tricarboxylic acid cycle; isocitrate from oxaloacetate: step 1/2. The polypeptide is Citrate synthase (aarA) (Acetobacter aceti).